A 159-amino-acid polypeptide reads, in one-letter code: Small ribosomal subunit protein uS9 (159 aa).

The protein belongs to the universal ribosomal protein uS9 family.

The sequence is that of Small ribosomal subunit protein uS9 from Rickettsia conorii (strain ATCC VR-613 / Malish 7).